A 302-amino-acid chain; its full sequence is 4-hydroxy-tetrahydrodipicolinate synthase (302 aa).

Thr-57 serves as a coordination point for pyruvate. The active-site Proton donor/acceptor is Tyr-145. Residue Lys-173 is the Schiff-base intermediate with substrate of the active site. Ile-213 provides a ligand contact to pyruvate.

Belongs to the DapA family. Homotetramer; dimer of dimers.

It is found in the cytoplasm. The catalysed reaction is L-aspartate 4-semialdehyde + pyruvate = (2S,4S)-4-hydroxy-2,3,4,5-tetrahydrodipicolinate + H2O + H(+). It functions in the pathway amino-acid biosynthesis; L-lysine biosynthesis via DAP pathway; (S)-tetrahydrodipicolinate from L-aspartate: step 3/4. Functionally, catalyzes the condensation of (S)-aspartate-beta-semialdehyde [(S)-ASA] and pyruvate to 4-hydroxy-tetrahydrodipicolinate (HTPA). The sequence is that of 4-hydroxy-tetrahydrodipicolinate synthase from Corynebacterium aurimucosum (strain ATCC 700975 / DSM 44827 / CIP 107346 / CN-1) (Corynebacterium nigricans).